The primary structure comprises 77 residues: Conotoxin King-Kong 1 (77 aa).

Residues 1-22 form the signal peptide; that stretch reads MKLTCMMIVAVLFLTAWTFATA. The propeptide occupies 23–49; that stretch reads DDSSNGLENLFSKAHHEMKNPEASKLN. 3 cysteine pairs are disulfide-bonded: cysteine 52-cysteine 67, cysteine 59-cysteine 71, and cysteine 66-cysteine 76. Methionine 61 carries the methionine sulfoxide; partial modification.

It belongs to the conotoxin O1 superfamily. In terms of tissue distribution, expressed by the venom duct.

It localises to the secreted. This is Conotoxin King-Kong 1 from Conus textile (Cloth-of-gold cone).